Here is a 455-residue protein sequence, read N- to C-terminus: Bifunctional protein GlmU (455 aa).

Positions 1-230 (MSNRFAVILA…VEETLGVNDR (230 aa)) are pyrophosphorylase. UDP-N-acetyl-alpha-D-glucosamine-binding positions include 9–12 (LAAG), Lys23, Gln73, and 78–79 (GT). Asp103 contributes to the Mg(2+) binding site. Residues Gly140, Glu155, Asn170, and Asn228 each contribute to the UDP-N-acetyl-alpha-D-glucosamine site. Residue Asn228 participates in Mg(2+) binding. The segment at 231–251 (VALAQAEQVMKRRINEAWMRK) is linker. The interval 252 to 455 (GVTFIDPEQT…KEHYVTKKNN (204 aa)) is N-acetyltransferase. Positions 333 and 351 each coordinate UDP-N-acetyl-alpha-D-glucosamine. Catalysis depends on His363, which acts as the Proton acceptor. UDP-N-acetyl-alpha-D-glucosamine is bound by residues Tyr366 and Asn377. Acetyl-CoA is bound by residues 386–387 (NY), Ala423, and Arg440.

It in the N-terminal section; belongs to the N-acetylglucosamine-1-phosphate uridyltransferase family. This sequence in the C-terminal section; belongs to the transferase hexapeptide repeat family. As to quaternary structure, homotrimer. The cofactor is Mg(2+).

It localises to the cytoplasm. It catalyses the reaction alpha-D-glucosamine 1-phosphate + acetyl-CoA = N-acetyl-alpha-D-glucosamine 1-phosphate + CoA + H(+). It carries out the reaction N-acetyl-alpha-D-glucosamine 1-phosphate + UTP + H(+) = UDP-N-acetyl-alpha-D-glucosamine + diphosphate. It functions in the pathway nucleotide-sugar biosynthesis; UDP-N-acetyl-alpha-D-glucosamine biosynthesis; N-acetyl-alpha-D-glucosamine 1-phosphate from alpha-D-glucosamine 6-phosphate (route II): step 2/2. It participates in nucleotide-sugar biosynthesis; UDP-N-acetyl-alpha-D-glucosamine biosynthesis; UDP-N-acetyl-alpha-D-glucosamine from N-acetyl-alpha-D-glucosamine 1-phosphate: step 1/1. The protein operates within bacterial outer membrane biogenesis; LPS lipid A biosynthesis. In terms of biological role, catalyzes the last two sequential reactions in the de novo biosynthetic pathway for UDP-N-acetylglucosamine (UDP-GlcNAc). The C-terminal domain catalyzes the transfer of acetyl group from acetyl coenzyme A to glucosamine-1-phosphate (GlcN-1-P) to produce N-acetylglucosamine-1-phosphate (GlcNAc-1-P), which is converted into UDP-GlcNAc by the transfer of uridine 5-monophosphate (from uridine 5-triphosphate), a reaction catalyzed by the N-terminal domain. In Halalkalibacterium halodurans (strain ATCC BAA-125 / DSM 18197 / FERM 7344 / JCM 9153 / C-125) (Bacillus halodurans), this protein is Bifunctional protein GlmU.